Reading from the N-terminus, the 435-residue chain is Chromatin structure-remodeling complex subunit RSC7 (435 aa).

Residues 1 to 97 (MSDSEGGLAS…DKGVTRSRNR (97 aa)) are disordered. Acidic residues predominate over residues 30 to 66 (DTEDLDIDENDENEDDDYREEEANEGVNEEEISDEEE). Position 86 is a phosphoserine (S86). The segment at 248-435 (ELRTKGNVIE…QNFEKCNEYI (188 aa)) is functional region; able to complement all NPL6 null allele phenotypes.

Belongs to the RSC7/SWP82 family. RSC7 subfamily. In terms of assembly, interacts with ARP7, ARP9, RSC3, RSC8, RSC30 and STH1. Component of the two forms of the RSC complex composed of at least either RSC1 or RSC2, and ARP7, ARP9, LDB7, NPL6, RSC3, RSC30, RSC4, RSC58, RSC6, RSC8, RSC9, SFH1, STH1, HTL1 and probably RTT102. The complexes interact with histone and histone variant components of centromeric chromatin. Component of a fungal-specific module (HTL1-LDB7-NPL6-RSC3-RSC30) within the RSC complex.

The protein localises to the nucleus. Functionally, component of the chromatin structure remodeling complex (RSC), which is involved in transcription regulation and nucleosome positioning. RSC is responsible for the transfer of a histone octamer from a nucleosome core particle to naked DNA. The reaction requires ATP and involves an activated RSC-nucleosome intermediate. Remodeling reaction also involves DNA translocation, DNA twist and conformational change. As a reconfigurer of centromeric and flanking nucleosomes, RSC complex is required both for proper kinetochore function in chromosome segregation and, via a PKC1-dependent signaling pathway, for organization of the cellular cytoskeleton. Together with HTL1, LDB7, RSC3, RSC30 components, defines a fungal-specific module within the RSC complex that plays a role in many cellular functions including the maintenance of cell wall integrity. Acidic protein important for nuclear protein localization. The protein is Chromatin structure-remodeling complex subunit RSC7 (NPL6) of Saccharomyces cerevisiae (strain ATCC 204508 / S288c) (Baker's yeast).